A 317-amino-acid polypeptide reads, in one-letter code: tRNA uridine(34) hydroxylase (317 aa).

The region spanning 123–217 is the Rhodanese domain; it reads EDDDTIVIDA…YGKDPETKGE (95 aa). Cysteine 177 acts as the Cysteine persulfide intermediate in catalysis.

The protein belongs to the TrhO family.

The enzyme catalyses uridine(34) in tRNA + AH2 + O2 = 5-hydroxyuridine(34) in tRNA + A + H2O. Catalyzes oxygen-dependent 5-hydroxyuridine (ho5U) modification at position 34 in tRNAs. The chain is tRNA uridine(34) hydroxylase from Staphylococcus carnosus (strain TM300).